We begin with the raw amino-acid sequence, 353 residues long: Photosystem II protein D1 (353 aa).

T2 bears the N-acetylthreonine mark. The residue at position 2 (T2) is a Phosphothreonine. 3 consecutive transmembrane segments (helical) span residues 29–46 (YIGW…TATS), 118–133 (HFLL…EWEL), and 142–156 (WIAV…AATA). H118 serves as a coordination point for chlorophyll a. Y126 serves as a coordination point for pheophytin a. 2 residues coordinate [CaMn4O5] cluster: D170 and E189. Residues 197–218 (FHMLGVAGVFGGSLFSAMHGSL) traverse the membrane as a helical segment. H198 contributes to the chlorophyll a binding site. A quinone-binding positions include H215 and 264–265 (SF). Residue H215 participates in Fe cation binding. Position 272 (H272) interacts with Fe cation. The helical transmembrane segment at 274–288 (FLAAWPVVGIWFTAL) threads the bilayer. [CaMn4O5] cluster is bound by residues H332, E333, D342, and A344. Residues 345 to 353 (AIEAPATNG) constitute a propeptide that is removed on maturation.

It belongs to the reaction center PufL/M/PsbA/D family. As to quaternary structure, PSII is composed of 1 copy each of membrane proteins PsbA, PsbB, PsbC, PsbD, PsbE, PsbF, PsbH, PsbI, PsbJ, PsbK, PsbL, PsbM, PsbT, PsbX, PsbY, PsbZ, Psb30/Ycf12, at least 3 peripheral proteins of the oxygen-evolving complex and a large number of cofactors. It forms dimeric complexes. The D1/D2 heterodimer binds P680, chlorophylls that are the primary electron donor of PSII, and subsequent electron acceptors. It shares a non-heme iron and each subunit binds pheophytin, quinone, additional chlorophylls, carotenoids and lipids. D1 provides most of the ligands for the Mn4-Ca-O5 cluster of the oxygen-evolving complex (OEC). There is also a Cl(-1) ion associated with D1 and D2, which is required for oxygen evolution. The PSII complex binds additional chlorophylls, carotenoids and specific lipids. serves as cofactor. Post-translationally, tyr-161 forms a radical intermediate that is referred to as redox-active TyrZ, YZ or Y-Z. C-terminally processed by CTPA; processing is essential to allow assembly of the oxygen-evolving complex and thus photosynthetic growth.

The protein resides in the plastid membrane. It carries out the reaction 2 a plastoquinone + 4 hnu + 2 H2O = 2 a plastoquinol + O2. Functionally, photosystem II (PSII) is a light-driven water:plastoquinone oxidoreductase that uses light energy to abstract electrons from H(2)O, generating O(2) and a proton gradient subsequently used for ATP formation. It consists of a core antenna complex that captures photons, and an electron transfer chain that converts photonic excitation into a charge separation. The D1/D2 (PsbA/PsbD) reaction center heterodimer binds P680, the primary electron donor of PSII as well as several subsequent electron acceptors. This is Photosystem II protein D1 from Cuscuta exaltata (Tall dodder).